The sequence spans 310 residues: tRNA uridine(34) hydroxylase (310 aa).

Residues 127–225 enclose the Rhodanese domain; that stretch reads KNQNTIVIDT…YLDEISKEEN (99 aa). Cysteine 185 functions as the Cysteine persulfide intermediate in the catalytic mechanism.

Belongs to the TrhO family.

It carries out the reaction uridine(34) in tRNA + AH2 + O2 = 5-hydroxyuridine(34) in tRNA + A + H2O. In terms of biological role, catalyzes oxygen-dependent 5-hydroxyuridine (ho5U) modification at position 34 in tRNAs. This chain is tRNA uridine(34) hydroxylase, found in Prochlorococcus marinus (strain MIT 9215).